The following is a 1025-amino-acid chain: Multidrug resistance protein MdtC (1025 aa).

12 helical membrane-spanning segments follow: residues F3–L23, E333–L353, I360–C380, L387–L407, V431–L451, F463–P483, L528–P548, V853–S873, V875–L895, L897–V917, P953–G973, and I984–V1004.

Belongs to the resistance-nodulation-cell division (RND) (TC 2.A.6) family. MdtC subfamily. Part of a tripartite efflux system composed of MdtA, MdtB and MdtC. MdtC forms a heteromultimer with MdtB.

It is found in the cell inner membrane. Its function is as follows. The MdtABC tripartite complex confers resistance against novobiocin and deoxycholate. In Escherichia coli O1:K1 / APEC, this protein is Multidrug resistance protein MdtC.